The sequence spans 763 residues: Phosphoglycerol transferase I (763 aa).

A run of 4 helical transmembrane segments spans residues methionine 1–alanine 21, tryptophan 26–tyrosine 46, isoleucine 77–valine 97, and valine 108–phenylalanine 128.

Belongs to the OpgB family.

It localises to the cell inner membrane. The enzyme catalyses a phosphatidylglycerol + a membrane-derived-oligosaccharide D-glucose = a 1,2-diacyl-sn-glycerol + a membrane-derived-oligosaccharide 6-(glycerophospho)-D-glucose.. It functions in the pathway glycan metabolism; osmoregulated periplasmic glucan (OPG) biosynthesis. Its function is as follows. Transfers a phosphoglycerol residue from phosphatidylglycerol to the membrane-bound nascent glucan backbones. The polypeptide is Phosphoglycerol transferase I (Salmonella dublin (strain CT_02021853)).